Consider the following 379-residue polypeptide: Glutamate 5-kinase (379 aa).

K19 contributes to the ATP binding site. Residues S59, D146, and N158 each coordinate substrate. Position 178 to 179 (178 to 179 (TD)) interacts with ATP. A PUA domain is found at 285 to 363 (RGAVTVDAGA…SEFERLLGYV (79 aa)).

Belongs to the glutamate 5-kinase family.

Its subcellular location is the cytoplasm. It carries out the reaction L-glutamate + ATP = L-glutamyl 5-phosphate + ADP. It functions in the pathway amino-acid biosynthesis; L-proline biosynthesis; L-glutamate 5-semialdehyde from L-glutamate: step 1/2. Catalyzes the transfer of a phosphate group to glutamate to form L-glutamate 5-phosphate. In Variovorax paradoxus (strain S110), this protein is Glutamate 5-kinase.